Consider the following 427-residue polypeptide: Serine--tRNA ligase (427 aa).

Residue 230 to 232 coordinates L-serine; the sequence is TAE. An ATP-binding site is contributed by 261–263; the sequence is RAE. An L-serine-binding site is contributed by E284. 348–351 lines the ATP pocket; sequence EISS. Residue S384 participates in L-serine binding.

The protein belongs to the class-II aminoacyl-tRNA synthetase family. Type-1 seryl-tRNA synthetase subfamily. Homodimer. The tRNA molecule binds across the dimer.

The protein localises to the cytoplasm. The enzyme catalyses tRNA(Ser) + L-serine + ATP = L-seryl-tRNA(Ser) + AMP + diphosphate + H(+). It carries out the reaction tRNA(Sec) + L-serine + ATP = L-seryl-tRNA(Sec) + AMP + diphosphate + H(+). The protein operates within aminoacyl-tRNA biosynthesis; selenocysteinyl-tRNA(Sec) biosynthesis; L-seryl-tRNA(Sec) from L-serine and tRNA(Sec): step 1/1. Catalyzes the attachment of serine to tRNA(Ser). Is also able to aminoacylate tRNA(Sec) with serine, to form the misacylated tRNA L-seryl-tRNA(Sec), which will be further converted into selenocysteinyl-tRNA(Sec). The polypeptide is Serine--tRNA ligase (Syntrophomonas wolfei subsp. wolfei (strain DSM 2245B / Goettingen)).